The following is a 139-amino-acid chain: Large ribosomal subunit protein uL14 (139 aa).

Belongs to the universal ribosomal protein uL14 family.

The chain is Large ribosomal subunit protein uL14 (RPL23) from Syntrichia ruralis (Great hairy screw-moss).